A 349-amino-acid chain; its full sequence is DNA polymerase IV (349 aa).

The UmuC domain occupies 7–188; sequence IIHIDMDYFF…LPVKKLFGVG (182 aa). Mg(2+)-binding residues include Asp-11 and Asp-106. Glu-107 is a catalytic residue.

This sequence belongs to the DNA polymerase type-Y family. Monomer. The cofactor is Mg(2+).

The protein localises to the cytoplasm. The catalysed reaction is DNA(n) + a 2'-deoxyribonucleoside 5'-triphosphate = DNA(n+1) + diphosphate. Functionally, poorly processive, error-prone DNA polymerase involved in untargeted mutagenesis. Copies undamaged DNA at stalled replication forks, which arise in vivo from mismatched or misaligned primer ends. These misaligned primers can be extended by PolIV. Exhibits no 3'-5' exonuclease (proofreading) activity. May be involved in translesional synthesis, in conjunction with the beta clamp from PolIII. The chain is DNA polymerase IV from Francisella tularensis subsp. holarctica (strain FTNF002-00 / FTA).